The following is a 124-amino-acid chain: Large ribosomal subunit protein uL14 (124 aa).

Belongs to the universal ribosomal protein uL14 family. Part of the 50S ribosomal subunit. Forms a cluster with proteins L3 and L19. In the 70S ribosome, L14 and L19 interact and together make contacts with the 16S rRNA in bridges B5 and B8.

Binds to 23S rRNA. Forms part of two intersubunit bridges in the 70S ribosome. The chain is Large ribosomal subunit protein uL14 from Clostridium novyi (strain NT).